Consider the following 79-residue polypeptide: Cell division protein ZapB (79 aa).

The stretch at 3 to 79 (LEVFEKLEAK…QALLGRMEEV (77 aa)) forms a coiled coil. Over residues 36-45 (SLTQEVQSAQ) the composition is skewed to polar residues. Residues 36–63 (SLTQEVQSAQHQREELERENNSLKEQQS) are disordered. A compositionally biased stretch (basic and acidic residues) spans 46–57 (HQREELERENNS).

Belongs to the ZapB family. As to quaternary structure, homodimer. The ends of the coiled-coil dimer bind to each other, forming polymers. Interacts with FtsZ.

The protein localises to the cytoplasm. Its function is as follows. Non-essential, abundant cell division factor that is required for proper Z-ring formation. It is recruited early to the divisome by direct interaction with FtsZ, stimulating Z-ring assembly and thereby promoting cell division earlier in the cell cycle. Its recruitment to the Z-ring requires functional FtsA or ZipA. The polypeptide is Cell division protein ZapB (Salmonella agona (strain SL483)).